The following is a 501-amino-acid chain: Chromosomal replication initiator protein DnaA (501 aa).

Positions 1 to 90 (MSVELWQQCV…KRSSAPRAAP (90 aa)) are domain I, interacts with DnaA modulators. Positions 91 to 164 (NAPLAAAASQ…QVEGALKHTS (74 aa)) are domain II. Positions 103-121 (AAPVASTPAPAPSKSSAKK) are enriched in low complexity. The segment at 103–150 (AAPVASTPAPAPSKSSAKKNAAENEEPSRDSFDPMAGASSQQAPIRAE) is disordered. Over residues 122-134 (NAAENEEPSRDSF) the composition is skewed to basic and acidic residues. The domain III, AAA+ region stretch occupies residues 165-381 (YLNRTFTFEN…GALKRVIAHS (217 aa)). Residues Gly-209, Gly-211, Lys-212, and Thr-213 each contribute to the ATP site. Residues 382–501 (HFMGRDITIE…YKNLLRTLTT (120 aa)) form a domain IV, binds dsDNA region.

The protein belongs to the DnaA family. As to quaternary structure, oligomerizes as a right-handed, spiral filament on DNA at oriC.

It localises to the cytoplasm. Its function is as follows. Plays an essential role in the initiation and regulation of chromosomal replication. ATP-DnaA binds to the origin of replication (oriC) to initiate formation of the DNA replication initiation complex once per cell cycle. Binds the DnaA box (a 9 base pair repeat at the origin) and separates the double-stranded (ds)DNA. Forms a right-handed helical filament on oriC DNA; dsDNA binds to the exterior of the filament while single-stranded (ss)DNA is stabiized in the filament's interior. The ATP-DnaA-oriC complex binds and stabilizes one strand of the AT-rich DNA unwinding element (DUE), permitting loading of DNA polymerase. After initiation quickly degrades to an ADP-DnaA complex that is not apt for DNA replication. Binds acidic phospholipids. The chain is Chromosomal replication initiator protein DnaA from Pseudomonas fluorescens (strain SBW25).